The chain runs to 282 residues: MELKQISSNKCFGGLQKVFEHSSVELKCKMKFAIYLPPQAESAKCPALYWLSGLTCTEQNFISKSGCQQAASEHGLVVIAPDTSPRGCNIKGEDDSWDFGTGAGFFVNATEDPWNTNYRMYSYVTEELPQLINANFPVDPQRISIFGHSMGGHGALICALKNPGKYRSVSAFAPICNPVLCPWGKKAFNGYLGPDQSKWKAYDATCLVKSYSGPQIDILIDQGKDDEFLSNGQLLPDNFIAACTEKKIPVVFRLQEGYDHSYYFIATFITDHIRHHAKYLNA.

The residue at position 4 (Lys4) is an N6-succinyllysine. Ser149 functions as the Charge relay system in the catalytic mechanism. At Lys200 the chain carries N6-acetyllysine. Residues Asp226 and His260 each act as charge relay system in the active site.

This sequence belongs to the esterase D family. As to quaternary structure, homodimer.

The protein resides in the cytoplasm. It is found in the cytoplasmic vesicle. The catalysed reaction is S-formylglutathione + H2O = formate + glutathione + H(+). Functionally, serine hydrolase involved in the detoxification of formaldehyde. This chain is S-formylglutathione hydrolase (Esd), found in Rattus norvegicus (Rat).